The chain runs to 495 residues: UDP-N-acetylmuramoyl-L-alanyl-D-glutamate--2,6-diaminopimelate ligase (495 aa).

Residues Leu27, Ser29, and 44–46 (HQA) each bind UDP-N-acetyl-alpha-D-muramoyl-L-alanyl-D-glutamate. Position 116 to 122 (116 to 122 (GTNGKTT)) interacts with ATP. UDP-N-acetyl-alpha-D-muramoyl-L-alanyl-D-glutamate is bound by residues Asn157, 158-159 (TT), Ser185, Gln191, and Arg193. Residue Lys225 is modified to N6-carboxylysine. Meso-2,6-diaminopimelate is bound by residues Arg390, 414–417 (DNPR), Gly465, and Glu469. Residues 414 to 417 (DNPR) carry the Meso-diaminopimelate recognition motif motif.

This sequence belongs to the MurCDEF family. MurE subfamily. The cofactor is Mg(2+). Carboxylation is probably crucial for Mg(2+) binding and, consequently, for the gamma-phosphate positioning of ATP.

The protein resides in the cytoplasm. The enzyme catalyses UDP-N-acetyl-alpha-D-muramoyl-L-alanyl-D-glutamate + meso-2,6-diaminopimelate + ATP = UDP-N-acetyl-alpha-D-muramoyl-L-alanyl-gamma-D-glutamyl-meso-2,6-diaminopimelate + ADP + phosphate + H(+). It participates in cell wall biogenesis; peptidoglycan biosynthesis. In terms of biological role, catalyzes the addition of meso-diaminopimelic acid to the nucleotide precursor UDP-N-acetylmuramoyl-L-alanyl-D-glutamate (UMAG) in the biosynthesis of bacterial cell-wall peptidoglycan. This chain is UDP-N-acetylmuramoyl-L-alanyl-D-glutamate--2,6-diaminopimelate ligase, found in Escherichia coli O6:H1 (strain CFT073 / ATCC 700928 / UPEC).